The following is a 416-amino-acid chain: MLLSVPLLLGLLGLAAADPAIYFKEQFLDGDAWTNRWVESKHKSDFGKFVLSSGKFYGDLEKDKGLQTSQDARFYALSAKFEPFSNKGQTLVVQFTVKHEQNIDCGGGYVKLFPSGLDQKDMHGDSEYNIMFGPDICGPGTKKVHVIFNYKGKNVLINKDIRCKDDEFTHLYTLIVRPDNTYEVKIDNSQVESGSLEDDWDFLPPKKIKDPDAAKPEDWDERAKIDDPTDSKPEDWDKPEHIPDPDAKKPEDWDEEMDGEWEPPVIQNPEYKGEWKPRQIDNPDYKGTWIHPEIDNPEYSPDANIYAYDSFAVLGLDLWQVKSGTIFDNFLITNDEAYAEEFGNETWGVTKAAEKQMKDKQDEEQRLKEEEEDKKRKEEEEAEDKEDDDDRDEDEDEEDEKEEDEEESPGQAKDEL.

Residues 1-17 (MLLSVPLLLGLLGLAAA) form the signal peptide. The segment at 18-197 (DPAIYFKEQF…NSQVESGSLE (180 aa)) is N-domain. Gln-26 lines the Ca(2+) pocket. The residue at position 48 (Lys-48) is an N6-acetyllysine. Residues Lys-62 and Lys-64 each coordinate Ca(2+). Lys-64 is modified (N6-(2-hydroxyisobutyryl)lysine). An intrachain disulfide couples Cys-105 to Cys-137. Positions 109, 111, 128, and 135 each coordinate an alpha-D-glucoside. Lys-159 is subject to N6-acetyllysine. The stretch at 191–202 (VESGSLEDDWDF) is one 1-1 repeat. Positions 191 to 255 (VESGSLEDDW…DAKKPEDWDE (65 aa)) are 4 X approximate repeats. The tract at residues 193–277 (SGSLEDDWDF…NPEYKGEWKP (85 aa)) is disordered. The segment at 198 to 308 (DDWDFLPPKK…YSPDANIYAY (111 aa)) is P-domain. Residues 207–251 (KIKDPDAAKPEDWDERAKIDDPTDSKPEDWDKPEHIPDPDAKKPE) show a composition bias toward basic and acidic residues. At Lys-209 the chain carries N6-acetyllysine. 6 repeat units span residues 210–221 (DPDAAKPEDWDE), 227–238 (DPTDSKPEDWDK), 244–255 (DPDAKKPEDWDE), 259–269 (GEWEPPVIQNP), 273–283 (GEWKPRQIDNP), and 287–297 (GTWIHPEIDNP). Positions 237–270 (DKPEHIPDPDAKKPEDWDEEMDGEWEPPVIQNPE) are interaction with PPIB. A compositionally biased stretch (acidic residues) spans 252–261 (DWDEEMDGEW). The tract at residues 259–297 (GEWEPPVIQNPEYKGEWKPRQIDNPDYKGTWIHPEIDNP) is 3 X approximate repeats. Residues 309–416 (DSFAVLGLDL…ESPGQAKDEL (108 aa)) form a C-domain region. Position 317 (Asp-317) interacts with an alpha-D-glucoside. Asp-328 contributes to the Ca(2+) binding site. The segment at 350–416 (TKAAEKQMKD…ESPGQAKDEL (67 aa)) is disordered. Positions 352 to 379 (AAEKQMKDKQDEEQRLKEEEEDKKRKEE) are enriched in basic and acidic residues. Positions 380-408 (EEAEDKEDDDDRDEDEDEEDEKEEDEEES) are enriched in acidic residues. The short motif at 413 to 416 (KDEL) is the Prevents secretion from ER element.

This sequence belongs to the calreticulin family. As to quaternary structure, monomer. Interacts with GABARAP, NR3C1, PDIA3/ERp57 and TRIM21. Interacts (via P-domain) with PDIA5. Interacts with PPIB. Interacts with SPACA9. Component of an EIF2 complex at least composed of CELF1/CUGBP1, CALR, CALR3, EIF2S1, EIF2S2, HSP90B1 and HSPA5. Interacts with CLCC1.

It localises to the endoplasmic reticulum lumen. The protein localises to the cytoplasm. It is found in the cytosol. Its subcellular location is the cytolytic granule. The protein resides in the secreted. It localises to the extracellular space. The protein localises to the extracellular matrix. It is found in the cell surface. Its subcellular location is the sarcoplasmic reticulum lumen. The protein resides in the cytoplasmic vesicle. It localises to the secretory vesicle. The protein localises to the cortical granule. Its function is as follows. Calcium-binding chaperone that promotes folding, oligomeric assembly and quality control in the endoplasmic reticulum (ER) via the calreticulin/calnexin cycle. This lectin interacts transiently with almost all of the monoglucosylated glycoproteins that are synthesized in the ER. Interacts with the DNA-binding domain of NR3C1 and mediates its nuclear export. Involved in maternal gene expression regulation. May participate in oocyte maturation via the regulation of calcium homeostasis. Present in the cortical granules of non-activated oocytes, is exocytosed during the cortical reaction in response to oocyte activation and might participate in the block to polyspermy. The chain is Calreticulin (Calr) from Mus musculus (Mouse).